Consider the following 848-residue polypeptide: Dynein axonemal intermediate chain 4 (848 aa).

Disordered regions lie at residues S345 to S370 and E431 to E464. Polar residues predominate over residues P359–S370. The segment covering E442–E456 has biased composition (basic and acidic residues). WD repeat units lie at residues Q534 to V574, K583 to D631, S658 to D698, G702 to S742, P745 to L784, and N790 to E829.

Part of the multisubunit axonemal dynein complex formed at least of two heavy chains and a number of intermediate and light chains. Associated with axonemal dynein subunits such as, DNAH2, DNAI3, and DYNLT1. Interacts with DYNLT1.

It localises to the cytoplasm. The protein resides in the cytoskeleton. The protein localises to the flagellum axoneme. Its subcellular location is the cilium axoneme. It is found in the dynein axonemal particle. Its function is as follows. Plays a critical role in the assembly of axonemal dynein complex, thereby playing a role in ciliary motility. This is Dynein axonemal intermediate chain 4 from Homo sapiens (Human).